A 992-amino-acid polypeptide reads, in one-letter code: Disks large-associated protein 1 (992 aa).

Disordered stretches follow at residues 150–209 and 355–376; these read TKSH…SWWS and KAMGDEDSGDSDTSPKPSPKVA. At S169 the chain carries Phosphoserine. Residues 194 to 209 are compositionally biased toward low complexity; the sequence is RSNASNASPTSPSWWS. Residues S362, S365, S368, S372, S389, S418, S421, S425, S428, S437, S509, S516, and S578 each carry the phosphoserine modification. T579 bears the Phosphothreonine mark. A phosphoserine mark is found at S581 and S605. T606 carries the post-translational modification Phosphothreonine. A phosphoserine mark is found at S608 and S611. 2 interaction with DYL2 regions span residues 665 to 676 and 687 to 698; these read LSIGIQVDDAEE and NKFQSVGVQVEE. Residues 914–980 are disordered; it reads WKQMDPLDKK…QNSATESAES (67 aa). Basic and acidic residues-rich tracts occupy residues 918-927 and 943-958; these read DPLDKKERRA and IRERSLESSQRQEARK. S947 bears the Phosphoserine mark. Positions 969–978 are enriched in polar residues; it reads VRQNSATESA. Residues 990-992 carry the PDZ-binding motif; that stretch reads TRL.

Belongs to the SAPAP family. As to quaternary structure, interacts with the guanylate kinase-like domain of DLG1, DLG2, DLG3, DLG4 and AIP1. Interacts with the PDZ domain of SHANK1, SHANK2 and SHANK3. Found in a complex with DLG4 and SHANK1, SHANK2 or SHANK3. Found in a complex with DLG4 and BEGAIN. Interacts with DYL2 and LRFN1. Interacts with MPP2 (via the SH3-Guanylate kinase-like sub-module). Post-translationally, ubiquitinated by TRIM3; leading to proteasomal degradation. Highest levels in the neocortex, part of the hippocampus, the granule cell layer of the cerebellum, the glomerular layer of the olfactory bulb, the inner plexiform layer of the retina, the ventral and dorsal horn of the spinal cord, the neuromuscular junction and the submandibular ganglion.

It localises to the cell membrane. The protein resides in the postsynaptic density. Its subcellular location is the synapse. Functionally, part of the postsynaptic scaffold in neuronal cells. This Mus musculus (Mouse) protein is Disks large-associated protein 1 (Dlgap1).